Reading from the N-terminus, the 60-residue chain is LKCKKLVPLFSKTCPPGKNLCYKMFMVAAPKVPVKRGCINVCPKSSLLVKYVCCNTDKCN.

Disulfide bonds link Cys-3-Cys-21, Cys-14-Cys-38, Cys-42-Cys-53, and Cys-54-Cys-59.

This sequence belongs to the three-finger toxin family. Short-chain subfamily. Type IA cytotoxin sub-subfamily. In terms of assembly, monomer in solution; Homodimer and oligomer in the presence of negatively charged lipids forming a pore with a size ranging between 20 and 30 Angstroms. As to expression, expressed by the venom gland.

It localises to the secreted. It is found in the target cell membrane. Its function is as follows. Shows cytolytic activity on many different cells by forming pore in lipid membranes. In vivo, increases heart rate or kills the animal by cardiac arrest. In addition, it binds to heparin with high affinity, interacts with Kv channel-interacting protein 1 (KCNIP1) in a calcium-independent manner, and binds to integrin alpha-V/beta-3 (ITGAV/ITGB3) with moderate affinity. The protein is Cytotoxin SP15d of Naja atra (Chinese cobra).